Here is a 120-residue protein sequence, read N- to C-terminus: Immunoglobulin kappa variable 2-30 (120 aa).

Positions 1–20 (MRLPAQLLGLLMLWVPGSSG) are cleaved as a signal peptide. A framework-1 region spans residues 21–43 (DVVMTQSPLSLPVTLGQPASISC). The region spanning 21–120 (DVVMTQSPLS…YYCMQGTHWP (100 aa)) is the Ig-like domain. Residues Cys-43 and Cys-113 are joined by a disulfide bond. Residues 44 to 59 (RSSQSLVYSDGNTYLN) form a complementarity-determining-1 region. Positions 60–74 (WFQQRPGQSPRRLIY) are framework-2. Positions 75–81 (KVSNRDS) are complementarity-determining-2. Residues 82–113 (GVPDRFSGSGSGTDFTLKISRVEAEDVGVYYC) form a framework-3 region. The complementarity-determining-3 stretch occupies residues 114–120 (MQGTHWP).

In terms of assembly, immunoglobulins are composed of two identical heavy chains and two identical light chains; disulfide-linked.

Its subcellular location is the secreted. The protein localises to the cell membrane. V region of the variable domain of immunoglobulin light chains that participates in the antigen recognition. Immunoglobulins, also known as antibodies, are membrane-bound or secreted glycoproteins produced by B lymphocytes. In the recognition phase of humoral immunity, the membrane-bound immunoglobulins serve as receptors which, upon binding of a specific antigen, trigger the clonal expansion and differentiation of B lymphocytes into immunoglobulins-secreting plasma cells. Secreted immunoglobulins mediate the effector phase of humoral immunity, which results in the elimination of bound antigens. The antigen binding site is formed by the variable domain of one heavy chain, together with that of its associated light chain. Thus, each immunoglobulin has two antigen binding sites with remarkable affinity for a particular antigen. The variable domains are assembled by a process called V-(D)-J rearrangement and can then be subjected to somatic hypermutations which, after exposure to antigen and selection, allow affinity maturation for a particular antigen. The sequence is that of Immunoglobulin kappa variable 2-30 from Homo sapiens (Human).